Reading from the N-terminus, the 368-residue chain is Glutamate 5-kinase (368 aa).

Lysine 13 serves as a coordination point for ATP. Substrate is bound by residues serine 54, aspartate 141, and asparagine 153. 173 to 174 (SD) serves as a coordination point for ATP. The PUA domain occupies 278–355 (RGVITVDEGA…DEIEAILGYA (78 aa)).

This sequence belongs to the glutamate 5-kinase family.

It localises to the cytoplasm. It carries out the reaction L-glutamate + ATP = L-glutamyl 5-phosphate + ADP. The protein operates within amino-acid biosynthesis; L-proline biosynthesis; L-glutamate 5-semialdehyde from L-glutamate: step 1/2. Functionally, catalyzes the transfer of a phosphate group to glutamate to form L-glutamate 5-phosphate. In Ruegeria sp. (strain TM1040) (Silicibacter sp.), this protein is Glutamate 5-kinase.